The sequence spans 339 residues: Putative zinc metalloprotease CA_C1796 (339 aa).

His-20 is a Zn(2+) binding site. The active site involves Glu-21. His-24 lines the Zn(2+) pocket. Transmembrane regions (helical) follow at residues 91 to 113, 275 to 297, and 310 to 330; these read LSIVIAGPIMNLILAAVLFCIVG, QLGVMNLLPIPALDGGFVFLFLF, and VGFVNTIGFALLMILMIVVTI. The PDZ domain occupies 99–177; it reads IMNLILAAVL…GIKLALKNNG (79 aa).

It belongs to the peptidase M50B family. Zn(2+) is required as a cofactor.

Its subcellular location is the cell membrane. The polypeptide is Putative zinc metalloprotease CA_C1796 (Clostridium acetobutylicum (strain ATCC 824 / DSM 792 / JCM 1419 / IAM 19013 / LMG 5710 / NBRC 13948 / NRRL B-527 / VKM B-1787 / 2291 / W)).